Here is a 494-residue protein sequence, read N- to C-terminus: Glutamyl-tRNA(Gln) amidotransferase subunit A (494 aa).

Catalysis depends on charge relay system residues K78 and S158. Residue S182 is the Acyl-ester intermediate of the active site.

Belongs to the amidase family. GatA subfamily. Heterotrimer of A, B and C subunits.

It carries out the reaction L-glutamyl-tRNA(Gln) + L-glutamine + ATP + H2O = L-glutaminyl-tRNA(Gln) + L-glutamate + ADP + phosphate + H(+). Functionally, allows the formation of correctly charged Gln-tRNA(Gln) through the transamidation of misacylated Glu-tRNA(Gln) in organisms which lack glutaminyl-tRNA synthetase. The reaction takes place in the presence of glutamine and ATP through an activated gamma-phospho-Glu-tRNA(Gln). The chain is Glutamyl-tRNA(Gln) amidotransferase subunit A from Xanthobacter autotrophicus (strain ATCC BAA-1158 / Py2).